Reading from the N-terminus, the 476-residue chain is Growth arrest-specific protein 7 (476 aa).

An SH3 domain is found at 1–62; that stretch reads MSGARCRTLY…PASYVQLLEK (62 aa). A WW domain is found at 77–110; the sequence is VILPPGWQSYLSPQGRRYYVNTTTNETTWERPSS. The segment at 100–171 is disordered; it reads TNETTWERPS…SSPSKKQSKE (72 aa). Positions 108–120 are enriched in low complexity; that stretch reads PSSSPGIPASPGS. 2 positions are modified to phosphoserine: serine 117 and serine 163. The span at 150–171 shows a compositional bias: polar residues; the sequence is RKSTGDSQNLGSSSPSKKQSKE. Residues 196–456 form the F-BAR domain; sequence TEWSYCDYFW…LLRKVDPAKD (261 aa). Residues 309–419 adopt a coiled-coil conformation; sequence ENFKKDMKKC…RLEVERVEMI (111 aa).

It localises to the cytoplasm. Functionally, may play a role in promoting maturation and morphological differentiation of cerebellar neurons. The polypeptide is Growth arrest-specific protein 7 (GAS7) (Homo sapiens (Human)).